A 209-amino-acid polypeptide reads, in one-letter code: Thymidine kinase (209 aa).

Residues 9–16 (SAMNAGKT) and 88–91 (DEAQ) each bind ATP. The active-site Proton acceptor is E89.

Belongs to the thymidine kinase family. Homotetramer.

Its subcellular location is the cytoplasm. It carries out the reaction thymidine + ATP = dTMP + ADP + H(+). The protein is Thymidine kinase of Xanthomonas campestris pv. campestris (strain 8004).